An 82-amino-acid chain; its full sequence is Translational regulator CsrA (82 aa).

The protein belongs to the CsrA/RsmA family. As to quaternary structure, homodimer; the beta-strands of each monomer intercalate to form a hydrophobic core while the alpha-helices form wings that extend away from the core. Each of the alpha-helical wings interacts with an FliW monomer, yielding a FliW-CsrA(2)-FliW complex.

Its subcellular location is the cytoplasm. In terms of biological role, a translational regulator that binds mRNA to regulate translation initiation and/or mRNA stability. Usually binds in the 5'-UTR at or near the Shine-Dalgarno sequence preventing ribosome-binding, thus repressing translation. Its main target seems to be the major flagellin gene, while its function is anatagonized by FliW. This is Translational regulator CsrA from Geobacillus thermodenitrificans (strain NG80-2).